A 201-amino-acid polypeptide reads, in one-letter code: ATP-dependent Clp protease proteolytic subunit (201 aa).

The Nucleophile role is filled by Ser-98. Residue His-123 is part of the active site.

This sequence belongs to the peptidase S14 family. Fourteen ClpP subunits assemble into 2 heptameric rings which stack back to back to give a disk-like structure with a central cavity, resembling the structure of eukaryotic proteasomes.

The protein localises to the cytoplasm. The catalysed reaction is Hydrolysis of proteins to small peptides in the presence of ATP and magnesium. alpha-casein is the usual test substrate. In the absence of ATP, only oligopeptides shorter than five residues are hydrolyzed (such as succinyl-Leu-Tyr-|-NHMec, and Leu-Tyr-Leu-|-Tyr-Trp, in which cleavage of the -Tyr-|-Leu- and -Tyr-|-Trp bonds also occurs).. Functionally, cleaves peptides in various proteins in a process that requires ATP hydrolysis. Has a chymotrypsin-like activity. Plays a major role in the degradation of misfolded proteins. The protein is ATP-dependent Clp protease proteolytic subunit of Desulfatibacillum aliphaticivorans.